Here is a 122-residue protein sequence, read N- to C-terminus: Conotoxin flf14c (122 aa).

A signal peptide spans 1–22 (MGFRVLVLIVMVTTSALPFTFS). Residues 23 to 96 (EESGRSPFRP…AESPVGQKRW (74 aa)) constitute a propeptide that is removed on maturation. The disordered stretch occupies residues 53–89 (RADGQTPDMHQPEMRRPEMRRPEVRRPEVRQPEFAES). Positions 62–85 (HQPEMRRPEMRRPEVRRPEVRQPE) are enriched in basic and acidic residues. 2 disulfide bridges follow: Cys-101/Cys-121 and Cys-105/Cys-117.

As to expression, expressed by the venom duct.

It localises to the secreted. The protein is Conotoxin flf14c of Conus anabathrum floridanus (Florida cone).